The following is a 525-amino-acid chain: Cytochrome P450 CYP72A613 (525 aa).

The chain crosses the membrane as a helical span at residues 2-22 (VFLFPTGTIIIWVLTILLAVI). Cys473 contributes to the heme binding site.

This sequence belongs to the cytochrome P450 family. Mainly expressed in leaves and seed pods and, to a lower extent, in flowers and stems.

The protein localises to the membrane. It participates in steroid metabolism; cholesterol metabolism. Its function is as follows. Involved in the biosynthesis of spiroketal steroid and saponin natural products from cholesterol such as diosgenin and analogs (e.g. furostanol and spirostanol), plant defense compounds used as main precursors for the industrial production of steroid hormones. During the 5,6-spiroketalization of cholesterol, may catalyze the 27-monohydroxylation of furostanol-type steroid to an intermediate product that undergoes a stereospecific formation of the terminal heterocycle to yield diosgenin. In Trigonella foenum-graecum (Fenugreek), this protein is Cytochrome P450 CYP72A613.